The sequence spans 540 residues: Solute carrier family 2, facilitated glucose transporter member 9 (540 aa).

A disordered region spans residues 1-31 (MARKQNRNSKELGLVPLTDDTSHAGPPGPGR). Topologically, residues 1–51 (MARKQNRNSKELGLVPLTDDTSHAGPPGPGRALLECDHLRSGVPGGRRRKD) are cytoplasmic. Ser9 bears the Phosphoserine mark. The helical transmembrane segment at 52-72 (WSCSLLVASLAGAFGSSFLYG) threads the bilayer. Residues 73–107 (YNLSVVNAPTPYIKAFYNESWERRHGRPIDPDTLT) lie on the Extracellular side of the membrane. The N-linked (GlcNAc...) asparagine glycan is linked to Asn90. Residues 108–128 (LLWSVTVSIFAIGGLVGTLIV) form a helical membrane-spanning segment. Residues 129-140 (KMIGKVLGRKHT) lie on the Cytoplasmic side of the membrane. The chain crosses the membrane as a helical span at residues 141-161 (LLANNGFAISAALLMACSLQA). The Extracellular portion of the chain corresponds to 162 to 171 (GAFEMLIVGR). The chain crosses the membrane as a helical span at residues 172 to 192 (FIMGIDGGVALSVLPMYLSEI). At 193–200 (SPKEIRGS) the chain is on the cytoplasmic side. The helical transmembrane segment at 201–221 (LGQVTAIFICIGVFTGQLLGL) threads the bilayer. Residues 222 to 231 (PELLGKESTW) are Extracellular-facing. A helical transmembrane segment spans residues 232–252 (PYLFGVIVVPAVVQLLSLPFL). The Cytoplasmic segment spans residues 253 to 316 (PDSPRYLLLE…LLRAPYVRWQ (64 aa)). The chain crosses the membrane as a helical span at residues 317–337 (VVTVIVTMACYQLCGLNAIWF). Over 338 to 354 (YTNSIFGKAGIPPAKIP) the chain is Extracellular. A helical transmembrane segment spans residues 355–375 (YVTLSTGGIETLAAVFSGLVI). At 376 to 381 (EHLGRR) the chain is on the cytoplasmic side. Residues 382-402 (PLLIGGFGLMGLFFGTLTITL) traverse the membrane as a helical segment. The Extracellular portion of the chain corresponds to 403–415 (TLQDHAPWVPYLS). The helical transmembrane segment at 416–436 (IVGILAIIASFCSGPGGIPFI) threads the bilayer. Residues 437-451 (LTGEFFQQSQRPAAF) are Cytoplasmic-facing. A helical transmembrane segment spans residues 452 to 472 (IIAGTVNWLSNFAVGLLFPFI). Topologically, residues 473–478 (QKSLDT) are extracellular. The helical transmembrane segment at 479–499 (YCFLVFATICITGAIYLYFVL) threads the bilayer. At 500–540 (PETKNRTYAEISQAFSKRNKAYPPEEKIDSAVTDGKINGRP) the chain is on the cytoplasmic side. Position 515 is a phosphoserine (Ser515). The disordered stretch occupies residues 519–540 (KAYPPEEKIDSAVTDGKINGRP).

This sequence belongs to the major facilitator superfamily. Sugar transporter (TC 2.A.1.1) family. Glucose transporter subfamily. As to expression, most strongly expressed in basolateral membranes of proximal renal tubular cells, liver and placenta. Also detected in lung, blood leukocytes, heart skeletal muscle and chondrocytes from articular cartilage. Detected in kidney membrane (at protein level). Only detected in the apical membranes of polarized renal tubular cells and placenta. Detected in kidney membrane (at protein level).

The protein localises to the cell membrane. It is found in the basolateral cell membrane. The protein resides in the apical cell membrane. The enzyme catalyses urate(out) = urate(in). Its activity is regulated as follows. Extracellular glucose and urate accelerate urate efflux. Intracellular urate, glucose and fructose accelerate urate influx. With respect to regulation, no effect of extracellular urate, glucose or fructose on urate efflux. Intracellular urate and fructose slightly accelerate urate influx. Functionally, high-capacity urate transporter, which may play a role in the urate reabsorption by proximal tubules. May have a residual high-affinity, low-capacity glucose and fructose transporter activity. Transports urate at rates 45- to 60-fold faster than glucose. Does not transport galactose. May mediate small uptake of adenine but not of other nucleobases. This chain is Solute carrier family 2, facilitated glucose transporter member 9, found in Homo sapiens (Human).